A 159-amino-acid chain; its full sequence is MALTVAKSALEAIREKGLGGFMRMIREEGFMRCLPDGNLLQTKIHNIGATLVGVDKFGNKYYQKLGDTQYGRHRWVEYASKDRYNASQVPAEWHGWLHFITDHTGDELLSLKPKRYGLEHKENFSGEGDAYIYHSKGHTLNPGQKNWTRYQSWVPTKTQ.

The protein belongs to the complex I NDUFA12 subunit family. As to quaternary structure, complex I is composed of at least 49 different subunits.

It localises to the mitochondrion inner membrane. In terms of biological role, accessory subunit of the mitochondrial membrane respiratory chain NADH dehydrogenase (Complex I), that is believed not to be involved in catalysis. Complex I functions in the transfer of electrons from NADH to the respiratory chain. The immediate electron acceptor for the enzyme is believed to be ubiquinone. This is Probable NADH dehydrogenase [ubiquinone] 1 alpha subcomplex subunit 12 from Arabidopsis thaliana (Mouse-ear cress).